A 152-amino-acid polypeptide reads, in one-letter code: Transcriptional repressor NrdR (152 aa).

Residues 3–34 (CPACQHNGTRVLDSRPVDEGRSIRRRRECESC) fold into a zinc finger. Residues 49-139 (LIVVKKEGIR…VYRQFKDINV (91 aa)) form the ATP-cone domain.

This sequence belongs to the NrdR family. The cofactor is Zn(2+).

In terms of biological role, negatively regulates transcription of bacterial ribonucleotide reductase nrd genes and operons by binding to NrdR-boxes. This Bacillus licheniformis (strain ATCC 14580 / DSM 13 / JCM 2505 / CCUG 7422 / NBRC 12200 / NCIMB 9375 / NCTC 10341 / NRRL NRS-1264 / Gibson 46) protein is Transcriptional repressor NrdR.